A 536-amino-acid polypeptide reads, in one-letter code: DNA damage-binding protein CMR1 (536 aa).

The segment covering 36–45 (REAGVDDTHR) has biased composition (basic and acidic residues). A disordered region spans residues 36–72 (REAGVDDTHRTVVKKKKSPSVSRGRSASPKVAPVATR). 6 WD repeats span residues 195 to 236 (LVYE…LSEN), 251 to 291 (FFTK…SNDI), 346 to 386 (LSDK…KKPE), 403 to 442 (DSRL…LPDD), 456 to 495 (GRWT…LAHL), and 496 to 535 (PTAT…KEEE).

This sequence belongs to the WD repeat DDB2/WDR76 family.

Functionally, DNA-binding protein that binds to both single- and double-stranded DNA. Binds preferentially to UV-damaged DNA. May be involved in DNA-metabolic processes. This chain is DNA damage-binding protein CMR1, found in Vanderwaltozyma polyspora (strain ATCC 22028 / DSM 70294 / BCRC 21397 / CBS 2163 / NBRC 10782 / NRRL Y-8283 / UCD 57-17) (Kluyveromyces polysporus).